The chain runs to 436 residues: Fasciclin-like arabinogalactan protein 15 (436 aa).

Residues 1–20 (MDDLSKLLFFLLLTISITTA) form the signal peptide. 2 consecutive FAS1 domains span residues 31 to 165 (NSNS…ERLL) and 249 to 392 (VKDF…DGVL). 2 N-linked (GlcNAc...) asparagine glycosylation sites follow: Asn-68 and Asn-271.

It belongs to the fasciclin-like AGP family.

It is found in the secreted. Its function is as follows. May be a cell surface adhesion protein. The chain is Fasciclin-like arabinogalactan protein 15 (FLA15) from Arabidopsis thaliana (Mouse-ear cress).